The following is a 380-amino-acid chain: Tryptophan 2,3-dioxygenase (380 aa).

Substrate-binding positions include 57 to 61 (FIITH) and arginine 128. Heme is bound at residue histidine 313. Residue threonine 328 coordinates substrate.

The protein belongs to the tryptophan 2,3-dioxygenase family. As to quaternary structure, homotetramer. Dimer of dimers. The cofactor is heme.

It carries out the reaction L-tryptophan + O2 = N-formyl-L-kynurenine. Its pathway is amino-acid degradation; L-tryptophan degradation via kynurenine pathway; L-kynurenine from L-tryptophan: step 1/2. It participates in pigment biosynthesis; ommochrome biosynthesis. Functionally, heme-dependent dioxygenase that catalyzes the oxidative cleavage of the L-tryptophan (L-Trp) pyrrole ring and converts L-tryptophan to N-formyl-L-kynurenine. Catalyzes the oxidative cleavage of the indole moiety. The protein is Tryptophan 2,3-dioxygenase of Drosophila ananassae (Fruit fly).